The chain runs to 217 residues: Urease accessory protein UreE (217 aa).

Residues 148 to 217 (AYGEAAAHGH…DHDHGSGHHH (70 aa)) are disordered. Residues 160–171 (AGHDHAHDHDHG) show a composition bias toward basic and acidic residues. Over residues 193 to 202 (AAAPAPHVHG) the composition is skewed to low complexity. Positions 206 to 217 (GHDHDHGSGHHH) are enriched in basic and acidic residues.

This sequence belongs to the UreE family.

Its subcellular location is the cytoplasm. Functionally, involved in urease metallocenter assembly. Binds nickel. Probably functions as a nickel donor during metallocenter assembly. This chain is Urease accessory protein UreE, found in Methylibium petroleiphilum (strain ATCC BAA-1232 / LMG 22953 / PM1).